The primary structure comprises 409 residues: Potassium channel subfamily K member 3 (409 aa).

The Cytoplasmic segment spans residues 1–8 (MKRQNVRT). A helical membrane pass occupies residues 9–29 (LALIVCTFTYLLVGAAVFDAL). N-linked (GlcNAc...) asparagine glycosylation occurs at Asn-53. The segment at residues 78-101 (WRFAGSFYFAITVITTIGYGHAAP) is an intramembrane region (pore-forming). The helical transmembrane segment at 108–128 (VFCMFYALLGIPLTLVMFQSL) threads the bilayer. Over 129-158 (GERINTFVRYLLHRAKRGLGMRHAEVSMAN) the chain is Cytoplasmic. A helical transmembrane segment spans residues 159–179 (MVLIGFVSCISTLCIGAAAFS). Positions 184–207 (WTFFQAYYYCFITLTTIGFGDYVA) form an intramembrane region, pore-forming. A helical transmembrane segment spans residues 223–243 (FSFVYILTGLTVIGAFLNLVV). Topologically, residues 244 to 409 (LRFMTMNAED…RGLMKRRSSV (166 aa)) are cytoplasmic.

It belongs to the two pore domain potassium channel (TC 1.A.1.8) family. Homodimer. Heterodimer with KCNK1. Heterodimer with KCNK9. As to expression, very strong expression in heart, also detected in kidney, brain, skin, testis, lung, skeletal muscle, small intestine and stomach. Not detected in liver, thymus or spleen. Expressed in adrenal glands mainly in zona glomerulosa and zona fasciculata of the cortex. Expressed at higher levels in brown and beige than in white adipocytes.

The protein resides in the cell membrane. The enzyme catalyses K(+)(in) = K(+)(out). It carries out the reaction Na(+)(in) = Na(+)(out). Its activity is regulated as follows. Activated by halothane and isoflurane. Inhibited by external acidification, diacylglycerol and anandamide. Inactivated by barium. Its function is as follows. K(+) channel that conducts voltage-dependent outward rectifying currents upon membrane depolarization. Voltage sensing is coupled to K(+) electrochemical gradient in an 'ion flux gating' mode where outward but not inward ion flow opens the gate. Changes ion selectivity and becomes permeable to Na(+) ions in response to extracellular acidification. Protonation of the pH sensor His-98 stabilizes C-type inactivation conformation likely converting the channel from outward K(+)-conducting, to inward Na(+)-conducting to nonconductive state. Homo- and heterodimerizes to form functional channels with distinct regulatory and gating properties. Allows K(+) currents with fast-gating kinetics important for the repolarization and hyperpolarization phases of action potentials. In cerebellar granule cells, heteromeric KCNK3:KCNK9 channel may hyperpolarize the resting membrane potential to limit intrinsic neuronal excitability, but once the action potential threshold is reached, it may support high-frequency action potential firing and increased neuronal excitability. Dispensable for central chemosensory respiration i.e. breathing controlled by brainstem CO2/pH, it rather conducts pH-sensitive currents and controls the firing rate of serotonergic raphe neurons involved in potentiation of the respiratory chemoreflex. Additionally, imparts chemosensitivity to type 1 cells in carotid bodies which respond to a decrease in arterial oxygen pressure or an increase in carbon dioxide pressure or pH to initiate adaptive changes in pulmonary ventilation. In adrenal gland, contributes to the maintenance of a hyperpolarized resting membrane potential of aldosterone-producing cells at zona glomerulosa and limits aldosterone release as part of a regulatory mechanism that controls arterial blood pressure and electrolyte homeostasis. In brown adipocytes, mediates K(+) efflux that counteracts norepinephrine-induced membrane depolarization, limits Ca(2+) efflux and downstream cAMP and PKA signaling, ultimately attenuating lipid oxidation and adaptive thermogenesis. The protein is Potassium channel subfamily K member 3 of Mus musculus (Mouse).